The chain runs to 380 residues: Queuine tRNA-ribosyltransferase (380 aa).

Aspartate 93 acts as the Proton acceptor in catalysis. Substrate contacts are provided by residues 93-97 (DSGGF), aspartate 147, glutamine 198, and glycine 225. The tract at residues 256-262 (GVGLPSN) is RNA binding. Aspartate 275 acts as the Nucleophile in catalysis. The RNA binding; important for wobble base 34 recognition stretch occupies residues 280 to 284 (ARNGR). The Zn(2+) site is built by cysteine 313, cysteine 315, cysteine 318, and histidine 344.

The protein belongs to the queuine tRNA-ribosyltransferase family. Homodimer. Within each dimer, one monomer is responsible for RNA recognition and catalysis, while the other monomer binds to the replacement base PreQ1. Zn(2+) is required as a cofactor.

The catalysed reaction is 7-aminomethyl-7-carbaguanine + guanosine(34) in tRNA = 7-aminomethyl-7-carbaguanosine(34) in tRNA + guanine. Its pathway is tRNA modification; tRNA-queuosine biosynthesis. Catalyzes the base-exchange of a guanine (G) residue with the queuine precursor 7-aminomethyl-7-deazaguanine (PreQ1) at position 34 (anticodon wobble position) in tRNAs with GU(N) anticodons (tRNA-Asp, -Asn, -His and -Tyr). Catalysis occurs through a double-displacement mechanism. The nucleophile active site attacks the C1' of nucleotide 34 to detach the guanine base from the RNA, forming a covalent enzyme-RNA intermediate. The proton acceptor active site deprotonates the incoming PreQ1, allowing a nucleophilic attack on the C1' of the ribose to form the product. After dissociation, two additional enzymatic reactions on the tRNA convert PreQ1 to queuine (Q), resulting in the hypermodified nucleoside queuosine (7-(((4,5-cis-dihydroxy-2-cyclopenten-1-yl)amino)methyl)-7-deazaguanosine). The sequence is that of Queuine tRNA-ribosyltransferase from Clostridium perfringens (strain ATCC 13124 / DSM 756 / JCM 1290 / NCIMB 6125 / NCTC 8237 / Type A).